The following is a 218-amino-acid chain: Large ribosomal subunit protein uL1 (218 aa).

Belongs to the universal ribosomal protein uL1 family. In terms of assembly, part of the 50S ribosomal subunit.

Functionally, probably involved in E site tRNA release. Binds directly to 23S rRNA. In terms of biological role, protein L1 is also a translational repressor protein, it controls the translation of its operon by binding to its mRNA. This is Large ribosomal subunit protein uL1 from Saccharolobus solfataricus (strain ATCC 35092 / DSM 1617 / JCM 11322 / P2) (Sulfolobus solfataricus).